A 448-amino-acid polypeptide reads, in one-letter code: MFSKIKKINFFKKTFSFLIAVVMMLFTVLGTNTYKAEAATTSFGGQLKVVGSQLCDSNGKPIQLKGMSSHGLQWYVNFVNYDSMKFLRDKWGVNVIRAAMYTNEGGYISNPSSQKEKIKKIVQDAIDLNMYVIIDWHILSDNNPNTYKEQAKSFFQEMAEEYGKYSNVIYEICNEPNGGTNWANDIKPYANYIIPAIRAIDPNNIIIVGTSTWSQDVDIAADNPLRYSNIMYTCHFYAGTHTQSLRDKINYAMSKGIAIFVTEWGTSDASGNGGPYLDESQKWVDFMASKNISWTNWALCDKSEASAALKSGSSTTGGWTDSDLTTSGLFVKKSIGGSNTTSQTSAPTFSLQSGTYDSAQTVTLTSSDNDSVIHYTTDGTTPTSSSPVYTSPITISKTTTVKAFTTKTGMTDSNITSAVYTISNTDPVKQVSAPTFSYNQEHTIQLKL.

The signal sequence occupies residues M1–Y34. Substrate contacts are provided by residues H70, W74–Y75, Y101, and H137. E175 serves as the catalytic Proton donor. Y237 provides a ligand contact to substrate. E263 acts as the Nucleophile in catalysis. Substrate is bound by residues A269–S270, W297, and K302–E304.

This sequence belongs to the glycosyl hydrolase 5 (cellulase A) family.

It catalyses the reaction Endohydrolysis of (1-&gt;4)-beta-D-glucosidic linkages in cellulose, lichenin and cereal beta-D-glucans.. The sequence is that of Endoglucanase (eglA) from Clostridium saccharobutylicum.